A 27-amino-acid polypeptide reads, in one-letter code: Secretin (27 aa).

A Valine amide modification is found at valine 27.

This sequence belongs to the glucagon family.

It is found in the secreted. Its function is as follows. Hormone involved in different processes, such as regulation of the pH of the duodenal content, food intake and water homeostasis. Exerts its biological effects by binding to secretin receptor (SCTR), a G-protein coupled receptor expressed in the basolateral domain of several cells. Acts as a key gastrointestinal hormone by regulating the pH of the duodenal content. Secreted by S cells of the duodenum in the crypts of Lieberkuehn and regulates the pH of the duodenum by (1) inhibiting the secretion of gastric acid from the parietal cells of the stomach and (2) stimulating the production of bicarbonate (NaHCO(3)) from the ductal cells of the pancreas. Production of bicarbonate is essential to neutralize the pH and ensure no damage is done to the small intestine by the gastric acid. In addition to regulating the pH of the duodenal content, plays a central role in diet induced thermogenesis: acts as a non-sympathetic brown fat (BAT) activator mediating prandial thermogenesis, which consequentially induces satiation. Mechanistically, secretin released by the gut after a meal binds to secretin receptor (SCTR) in brown adipocytes, activating brown fat thermogenesis by stimulating lipolysis, which is sensed in the brain and promotes satiation. Also able to stimulate lipolysis in white adipocytes. Also plays an important role in cellular osmoregulation: released into the systemic circulation in response to hyperosmolality and acts at different levels in the hypothalamus, pituitary and kidney to regulate water homeostasis. Also plays a role in the central nervous system, possibly by acting as a neuropeptide hormone: required for hippocampal synaptic function and neural progenitor cells maintenance. The protein is Secretin of Canis lupus familiaris (Dog).